Reading from the N-terminus, the 371-residue chain is Peptidyl-prolyl cis-trans isomerase D (371 aa).

One can recognise a PPIase cyclophilin-type domain in the interval 8–172 (FFDIAIGGQL…EPVVIADCGQ (165 aa)). The segment at 175–202 (SDDPFLAERTSTDGDPYEDYPDDEDQEL) is disordered. A compositionally biased stretch (acidic residues) spans 189 to 201 (DPYEDYPDDEDQE). TPR repeat units follow at residues 212–245 (AKTI…LDVH), 265–303 (APLL…LELS), and 308–341 (AKAY…LPED).

It belongs to the cyclophilin-type PPIase family. PPIase D subfamily.

It is found in the cytoplasm. It carries out the reaction [protein]-peptidylproline (omega=180) = [protein]-peptidylproline (omega=0). Its function is as follows. PPIases accelerate the folding of proteins. It catalyzes the cis-trans isomerization of proline imidic peptide bonds in oligopeptides. This chain is Peptidyl-prolyl cis-trans isomerase D (Cyp40), found in Amanita muscaria (Fly agaric).